Here is a 183-residue protein sequence, read N- to C-terminus: UPF0397 protein EAT1b_2102 (183 aa).

5 helical membrane passes run 9–29, 42–62, 74–94, 117–137, and 147–167; these read IVATGIGAAVFIILSRFAAIP, AFLAFMAVLFGPITAGLIGLI, SPWWSWVIVSGFVGLGIGLIA, AVVQAIGWIVIAPVLDILIYA, and GAVAATSNILTVGVIGTLLLV.

It belongs to the UPF0397 family.

The protein localises to the cell membrane. The sequence is that of UPF0397 protein EAT1b_2102 from Exiguobacterium sp. (strain ATCC BAA-1283 / AT1b).